A 666-amino-acid chain; its full sequence is LEAF RUST 10 DISEASE-RESISTANCE LOCUS RECEPTOR-LIKE PROTEIN KINASE-like 2.5 (666 aa).

Residues 1–30 form the signal peptide; it reads MINFSLSLTKSMSYSFIWMLFVIHISCVLS. Residues 31-275 lie on the Extracellular side of the membrane; the sequence is ADGNHILCSP…PTRNKVILKL (245 aa). Residues Asn-119, Asn-141, Asn-171, and Asn-198 are each glycosylated (N-linked (GlcNAc...) asparagine). The helical transmembrane segment at 276 to 296 threads the bilayer; that stretch reads FFIVIYVLGIGAASFAMMGVI. Over 297 to 666 the chain is Cytoplasmic; that stretch reads LVVTCLNCLI…YTEICSINVA (370 aa). The Protein kinase domain maps to 348 to 636; sequence KSFAEVIGKG…ALEVPPRPVL (289 aa). ATP is bound by residues 354–362 and Lys-376; that span reads IGKGGFGTV. The residue at position 420 (Tyr-420) is a Phosphotyrosine. Catalysis depends on Asp-471, which acts as the Proton acceptor. Residues Thr-508 and Thr-511 each carry the phosphothreonine modification.

Belongs to the protein kinase superfamily. Ser/Thr protein kinase family.

It localises to the membrane. It carries out the reaction L-seryl-[protein] + ATP = O-phospho-L-seryl-[protein] + ADP + H(+). The catalysed reaction is L-threonyl-[protein] + ATP = O-phospho-L-threonyl-[protein] + ADP + H(+). The polypeptide is LEAF RUST 10 DISEASE-RESISTANCE LOCUS RECEPTOR-LIKE PROTEIN KINASE-like 2.5 (Arabidopsis thaliana (Mouse-ear cress)).